The primary structure comprises 447 residues: Elongation factor 1-alpha (447 aa).

Positions 5 to 230 (KVHINIVVIG…DNINEPKRPS (226 aa)) constitute a tr-type G domain. The segment at 14 to 21 (GHVDSGKS) is G1. 14-21 (GHVDSGKS) provides a ligand contact to GTP. Position 55 is an N6,N6-dimethyllysine (Lys55). Residues 70–74 (GITID) are G2. An N6,N6,N6-trimethyllysine modification is found at Lys79. Residues 91 to 94 (DAPG) are G3. Residues 91–95 (DAPGH) and 153–156 (NKMD) contribute to the GTP site. Residues 153 to 156 (NKMD) form a G4 region. The residue at position 187 (Lys187) is an N6,N6,N6-trimethyllysine. The segment at 194 to 196 (SGF) is G5. The residue at position 261 (Lys261) is an N6-methyllysine. Position 289 is a 5-glutamyl glycerylphosphorylethanolamine (Glu289). The residue at position 306 (Lys306) is an N6,N6,N6-trimethyllysine. Position 362 is a 5-glutamyl glycerylphosphorylethanolamine (Glu362). At Lys396 the chain carries N6,N6,N6-trimethyllysine.

Belongs to the TRAFAC class translation factor GTPase superfamily. Classic translation factor GTPase family. EF-Tu/EF-1A subfamily.

The protein resides in the cytoplasm. Functionally, this protein promotes the GTP-dependent binding of aminoacyl-tRNA to the A-site of ribosomes during protein biosynthesis. The chain is Elongation factor 1-alpha from Vicia faba (Broad bean).